Here is a 76-residue protein sequence, read N- to C-terminus: Cyclin-dependent kinases regulatory subunit (76 aa).

The protein belongs to the CKS family. Forms a homohexamer that can probably bind six kinase subunits.

Functionally, binds to the catalytic subunit of the cyclin dependent kinases and is essential for their biological function. The sequence is that of Cyclin-dependent kinases regulatory subunit from Patella vulgata (Common limpet).